The chain runs to 360 residues: Protein OSB4, chloroplastic (360 aa).

A chloroplast-targeting transit peptide spans 1–61 (MQFLGRSISK…AEKSSEEWPR (61 aa)). Positions 28–64 (SQQFLSTSSTESSSRTRGGGGGNRAEKSSEEWPRPME) are disordered. Low complexity predominate over residues 33–43 (STSSTESSSRT). A compositionally biased stretch (basic and acidic residues) spans 51-61 (RAEKSSEEWPR). Residues 71–188 (IANSIDLIGY…VMVRDLHYIE (118 aa)) form the SSB domain. PDF region stretches follow at residues 224–276 (WFDL…SELK) and 296–344 (WKDL…EKLP).

The protein localises to the plastid. Its subcellular location is the chloroplast. Functionally, binds single-stranded DNA. The protein is Protein OSB4, chloroplastic (OSB4) of Arabidopsis thaliana (Mouse-ear cress).